Here is a 674-residue protein sequence, read N- to C-terminus: Dymeclin (674 aa).

G2 carries the N-myristoyl glycine lipid modification.

The protein belongs to the dymeclin family. As to quaternary structure, interacts with GOLM1 and PPIB. Post-translationally, myristoylated in vitro; myristoylation is not essential for protein targeting to Golgi compartment.

The protein localises to the cytoplasm. It localises to the golgi apparatus. It is found in the membrane. Its function is as follows. Necessary for correct organization of Golgi apparatus. Involved in bone development. The sequence is that of Dymeclin (Dym) from Rattus norvegicus (Rat).